The sequence spans 505 residues: Betaine aldehyde dehydrogenase 1 (505 aa).

163–172 serves as a coordination point for betaine aldehyde; the sequence is WNYPLLMATW. 240-245 is a binding site for NAD(+); sequence GSTETG. Betaine aldehyde is bound by residues Glu-262, 294–297, and Cys-455; that span reads QVCS. Active-site residues include Glu-262 and Cys-296. 4-aminobutanal contacts are provided by residues 262–263 and Cys-296; that span reads EL. Trp-461 lines the 4-aminobutanal pocket. Residues 503 to 505 carry the Microbody targeting signal motif; sequence SKL.

This sequence belongs to the aldehyde dehydrogenase family. Homodimer.

The protein localises to the peroxisome. It catalyses the reaction betaine aldehyde + NAD(+) + H2O = glycine betaine + NADH + 2 H(+). Its pathway is amine and polyamine biosynthesis; betaine biosynthesis via choline pathway; betaine from betaine aldehyde: step 1/1. Functionally, dehydrogenase that can use N-acetyl-gamma-aminobutyraldehyde (NAGABald), gamma-guanidinobutyraldehyde (GGBald), betaine aldehyde (Bet-ald), gamma-aminobutyraldehyde (GAB-ald), acetaldehyde, 4-aminobutylaldehyde (AB-ald), 3-aminopropionaldehyde (AP-ald), 4-N-trimethylaminobutyraldehyde (TMAB-ald) and 3-N-trimethylaminopropionaldehyde (TMAP-ald) as substrates. Catalyzes the oxidation of GAB-ald more efficiently than Bet-ald. May convert acetaldehyde into acetate, thus facilitating the production of acetyl-CoA in peroxisomes under anaerobic conditions. The polypeptide is Betaine aldehyde dehydrogenase 1 (BADH1) (Oryza sativa subsp. japonica (Rice)).